The chain runs to 173 residues: Dual-action ribosomal maturation protein DarP (173 aa).

It belongs to the DarP family.

The protein localises to the cytoplasm. Member of a network of 50S ribosomal subunit biogenesis factors which assembles along the 30S-50S interface, preventing incorrect 23S rRNA structures from forming. Promotes peptidyl transferase center (PTC) maturation. The sequence is that of Dual-action ribosomal maturation protein DarP from Pseudomonas putida (strain W619).